A 164-amino-acid polypeptide reads, in one-letter code: 6,7-dimethyl-8-ribityllumazine synthase 1 (164 aa).

5-amino-6-(D-ribitylamino)uracil contacts are provided by residues Phe-27, 58-60 (SLE), and 87-89 (TII). Residue 92–93 (DT) participates in (2S)-2-hydroxy-3-oxobutyl phosphate binding. The active-site Proton donor is the His-95. Residue Asn-120 coordinates 5-amino-6-(D-ribitylamino)uracil. Arg-134 lines the (2S)-2-hydroxy-3-oxobutyl phosphate pocket.

It belongs to the DMRL synthase family. Homopentamer.

It carries out the reaction (2S)-2-hydroxy-3-oxobutyl phosphate + 5-amino-6-(D-ribitylamino)uracil = 6,7-dimethyl-8-(1-D-ribityl)lumazine + phosphate + 2 H2O + H(+). It participates in cofactor biosynthesis; riboflavin biosynthesis; riboflavin from 2-hydroxy-3-oxobutyl phosphate and 5-amino-6-(D-ribitylamino)uracil: step 1/2. Catalyzes the formation of 6,7-dimethyl-8-ribityllumazine by condensation of 5-amino-6-(D-ribitylamino)uracil with 3,4-dihydroxy-2-butanone 4-phosphate. This is the penultimate step in the biosynthesis of riboflavin. This Mesorhizobium japonicum (strain LMG 29417 / CECT 9101 / MAFF 303099) (Mesorhizobium loti (strain MAFF 303099)) protein is 6,7-dimethyl-8-ribityllumazine synthase 1 (ribH1).